The sequence spans 694 residues: Two-component response regulator ORR25 (694 aa).

The Response regulatory domain occupies 17–132; sequence RVLAVDDSPV…DIQNIWQHVW (116 aa). D68 bears the 4-aspartylphosphate mark. The region spanning 183–242 is the HTH myb-type domain; that stretch reads TLKRQRVVWTPELHRDFVIAVHELGVDRAVPRKILRMMKVDYMTRENIASHLQKYRLYLK. Residues 213-238 constitute a DNA-binding region (H-T-H motif); sequence PRKILRMMKVDYMTRENIASHLQKYR. The disordered stretch occupies residues 326-349; it reads VGHGGSPGNNPVFQPLQNSSNARK. Residues 333-347 are compositionally biased toward polar residues; the sequence is GNNPVFQPLQNSSNA.

Belongs to the ARR family. Type-B subfamily. Post-translationally, two-component system major event consists of a His-to-Asp phosphorelay between a sensor histidine kinase (HK) and a response regulator (RR). In plants, the His-to-Asp phosphorelay involves an additional intermediate named Histidine-containing phosphotransfer protein (HPt). This multistep phosphorelay consists of a His-Asp-His-Asp sequential transfer of a phosphate group between first a His and an Asp of the HK protein, followed by the transfer to a conserved His of the HPt protein and finally the transfer to an Asp in the receiver domain of the RR protein.

The protein resides in the nucleus. In terms of biological role, transcriptional activator that binds specific DNA sequence. Functions as a response regulator involved in His-to-Asp phosphorelay signal transduction system. Phosphorylation of the Asp residue in the receiver domain activates the ability of the protein to promote the transcription of target genes. May directly activate some type-A response regulators in response to cytokinins. This chain is Two-component response regulator ORR25, found in Oryza sativa subsp. japonica (Rice).